The primary structure comprises 444 residues: MRNIIYFILSLLFSVTSYALETINIEHGRADPTPIAVNKFDADNSAADVLGHDMVKVISNDLKLSGLFRPISAASFIEEKTGIEYKPLFAAWRQINASLLVNGEVTKLESGKFQISFILWDTLLEKQLVGEILEVPKNLWRRAAHKIADKIYEKITGDAGYFDTKIVYVSESSSLPKIKRIALMDYDGANNKYLTNGKSLVLTPRFARSADKIFYVSYATKRRVLVYEKDLKTGKESVVGDFPGISFAPRFSPDGRKAVMSIAKNGSTHIYEIDLATKRLHKLTDGFGINTSPSYSPDGKKIVYNSDRNGVPQLYIMNSDGSDVQRISFGGGSYAAPSWSPRGDYIAFTKITKGDGGKTFNIGIMKACPQDDKNSERIITSGYLVESPCWSPNGRVIMFAKGWPSSAKAPGKNKIFAIDLTGHNEREIMTPADASDPEWSGVLN.

Positions 1 to 19 (MRNIIYFILSLLFSVTSYA) are cleaved as a signal peptide.

This sequence belongs to the TolB family. As to quaternary structure, the Tol-Pal system is composed of five core proteins: the inner membrane proteins TolA, TolQ and TolR, the periplasmic protein TolB and the outer membrane protein Pal. They form a network linking the inner and outer membranes and the peptidoglycan layer.

It is found in the periplasm. Part of the Tol-Pal system, which plays a role in outer membrane invagination during cell division and is important for maintaining outer membrane integrity. The sequence is that of Tol-Pal system protein TolB from Rickettsia peacockii (strain Rustic).